Here is a 464-residue protein sequence, read N- to C-terminus: Cysteine--tRNA ligase (464 aa).

C32 serves as a coordination point for Zn(2+). The 'HIGH' region motif lies at 34–44 (VTVYDDCHIGH). C213, H238, and E242 together coordinate Zn(2+). The short motif at 270-274 (KMSKS) is the 'KMSKS' region element. K273 serves as a coordination point for ATP.

The protein belongs to the class-I aminoacyl-tRNA synthetase family. In terms of assembly, monomer. Requires Zn(2+) as cofactor.

The protein resides in the cytoplasm. The enzyme catalyses tRNA(Cys) + L-cysteine + ATP = L-cysteinyl-tRNA(Cys) + AMP + diphosphate. This Francisella tularensis subsp. holarctica (strain LVS) protein is Cysteine--tRNA ligase.